We begin with the raw amino-acid sequence, 771 residues long: Dol-P-Glc:Glc(2)Man(9)GlcNAc(2)-PP-Dol alpha-1,2-glucosyltransferase (771 aa).

The next 7 membrane-spanning stretches (helical) occupy residues 45 to 65 (FITASGFILIYFFARSWLALV), 160 to 180 (VSFYAYHTAINIALFPVIFFF), 182 to 202 (GLYYTDVASTLVMLVAYWNHL), 221 to 241 (VVLGVAALFMRQTNVFWVVVY), 293 to 313 (VDMAWPDDWALCLLSIGIAAL), 326 to 346 (HITIMGLFAGFVAWNGGVVLG), and 357 to 377 (LPQMLYIWPFFAFFSAPLLIP). Positions 392 to 449 (TPTPSHTTTKDPGRSSWRFTKPSITSKKSSTTKPPQRSGPTPASSSSSSSSFSPDTNS) are disordered. 2 stretches are compositionally biased toward low complexity: residues 411–426 (TKPSITSKKSSTTKPP) and 435–449 (SSSSSSSSFSPDTNS). The N-linked (GlcNAc...) asparagine glycan is linked to Asn448. A run of 2 helical transmembrane segments spans residues 469-489 (PFYLLATILLSAAIIHYNTII) and 503-525 (YIFRYTILRSSLVRLALVAAYTL). Residues 584–593 (QKNIKDKQKE) show a composition bias toward basic and acidic residues. Residues 584–605 (QKNIKDKQKEVEEEEEEEEKED) are disordered. Residues 594-604 (VEEEEEEEEKE) are compositionally biased toward acidic residues. Helical transmembrane passes span 631–651 (TSTVLLWLLTTTLSLVTAPLV) and 656–676 (FILPWVFYRLLVPAMPVSSSL). Residues 682–708 (SSSFASSTTESGNGDGNDAATAARQQQ) form a disordered region. The chain crosses the membrane as a helical span at residues 728–748 (LALETVWFLAINIGTMYMFLF).

It belongs to the ALG10 glucosyltransferase family.

The protein resides in the endoplasmic reticulum membrane. It catalyses the reaction an alpha-D-Glc-(1-&gt;3)-alpha-D-Glc-(1-&gt;3)-alpha-D-Man-(1-&gt;2)-alpha-D-Man-(1-&gt;2)-alpha-D-Man-(1-&gt;3)-[alpha-D-Man-(1-&gt;2)-alpha-D-Man-(1-&gt;3)-[alpha-D-Man-(1-&gt;2)-alpha-D-Man-(1-&gt;6)]-alpha-D-Man-(1-&gt;6)]-beta-D-Man-(1-&gt;4)-beta-D-GlcNAc-(1-&gt;4)-alpha-D-GlcNAc-diphospho-di-trans,poly-cis-dolichol + a di-trans,poly-cis-dolichyl beta-D-glucosyl phosphate = a alpha-D-Glc-(1-&gt;2)-alpha-D-Glc-(1-&gt;3)-alpha-D-Glc-(1-&gt;3)-alpha-D-Man-(1-&gt;2)-alpha-D-Man-(1-&gt;2)-alpha-D-Man-(1-&gt;3)-[alpha-D-Man-(1-&gt;2)-alpha-D-Man-(1-&gt;3)-[alpha-D-Man-(1-&gt;2)-alpha-D-Man-(1-&gt;6)]-alpha-D-Man-(1-&gt;6)]-beta-D-Man-(1-&gt;4)-beta-D-GlcNAc-(1-&gt;4)-alpha-D-GlcNAc-diphospho-di-trans,poly-cis-dolichol + a di-trans,poly-cis-dolichyl phosphate + H(+). It participates in protein modification; protein glycosylation. Dol-P-Glc:Glc(2)Man(9)GlcNAc(2)-PP-Dol alpha-1,2-glucosyltransferase that operates in the biosynthetic pathway of dolichol-linked oligosaccharides, the glycan precursors employed in protein asparagine (N)-glycosylation. The assembly of dolichol-linked oligosaccharides begins on the cytosolic side of the endoplasmic reticulum membrane and finishes in its lumen. The sequential addition of sugars to dolichol pyrophosphate produces dolichol-linked oligosaccharides containing fourteen sugars, including two GlcNAcs, nine mannoses and three glucoses. Once assembled, the oligosaccharide is transferred from the lipid to nascent proteins by oligosaccharyltransferases. In the lumen of the endoplasmic reticulum, adds the third and last glucose residue from dolichyl phosphate glucose (Dol-P-Glc) onto the lipid-linked oligosaccharide intermediate Glc(2)Man(9)GlcNAc(2)-PP-Dol to produce Glc(3)Man(9)GlcNAc(2)-PP-Dol. This chain is Dol-P-Glc:Glc(2)Man(9)GlcNAc(2)-PP-Dol alpha-1,2-glucosyltransferase (alg-10), found in Neurospora crassa (strain ATCC 24698 / 74-OR23-1A / CBS 708.71 / DSM 1257 / FGSC 987).